The primary structure comprises 117 residues: Non-specific lipid-transfer protein 1 (117 aa).

Residues 1–25 form the signal peptide; sequence MAGLVKLSCLVLACMIVAGPIATNA. Cystine bridges form between Cys29-Cys76, Cys39-Cys53, Cys54-Cys99, and Cys74-Cys113.

The protein belongs to the plant LTP family.

Plant non-specific lipid-transfer proteins transfer phospholipids as well as galactolipids across membranes. May play a role in wax or cutin deposition in the cell walls of expanding epidermal cells and certain secretory tissues. This chain is Non-specific lipid-transfer protein 1 (LTP1), found in Brassica napus (Rape).